We begin with the raw amino-acid sequence, 220 residues long: MDQEAKDLLVRGAAQLGVELTSAQVGKFALFAAELRKWNRKINLTAITTEREIALKHFVDSLSLCRAVGKGGKLLDLGSGGGFPVIPFAILHPKSEVVSVDAVEKKIIFQRHMGRLLGLSCFQSIHARGEELAGRFAGHFDWIVSRAFSDIPTFVRMALPLLRPNGAIVAMKGQGGREEAETSRPALEVLGVEIRQVLEFPLPFSGDGRSLIVMGRKNES.

Residues Gly78, Phe83, 129 to 130 (GE), and Arg146 contribute to the S-adenosyl-L-methionine site.

This sequence belongs to the methyltransferase superfamily. RNA methyltransferase RsmG family.

The protein localises to the cytoplasm. It carries out the reaction guanosine(527) in 16S rRNA + S-adenosyl-L-methionine = N(7)-methylguanosine(527) in 16S rRNA + S-adenosyl-L-homocysteine. Specifically methylates the N7 position of guanine in position 527 of 16S rRNA. This Geobacter metallireducens (strain ATCC 53774 / DSM 7210 / GS-15) protein is Ribosomal RNA small subunit methyltransferase G.